A 500-amino-acid chain; its full sequence is Probable cytosol aminopeptidase (500 aa).

2 residues coordinate Mn(2+): K265 and D270. Residue K277 is part of the active site. D288, D347, and E349 together coordinate Mn(2+). R351 is an active-site residue.

It belongs to the peptidase M17 family. The cofactor is Mn(2+).

The protein resides in the cytoplasm. The catalysed reaction is Release of an N-terminal amino acid, Xaa-|-Yaa-, in which Xaa is preferably Leu, but may be other amino acids including Pro although not Arg or Lys, and Yaa may be Pro. Amino acid amides and methyl esters are also readily hydrolyzed, but rates on arylamides are exceedingly low.. It carries out the reaction Release of an N-terminal amino acid, preferentially leucine, but not glutamic or aspartic acids.. In terms of biological role, presumably involved in the processing and regular turnover of intracellular proteins. Catalyzes the removal of unsubstituted N-terminal amino acids from various peptides. The polypeptide is Probable cytosol aminopeptidase (Rickettsia africae (strain ESF-5)).